Here is a 660-residue protein sequence, read N- to C-terminus: tRNA 5-methylaminomethyl-2-thiouridine biosynthesis bifunctional protein MnmC (660 aa).

Positions 1 to 235 are tRNA (mnm(5)s(2)U34)-methyltransferase; it reads MTITRHARID…KWEVLRGAFI (235 aa). Residues 266–660 form an FAD-dependent cmnm(5)s(2)U34 oxidoreductase region; sequence IGAGLAGCAT…LRGLIRGGGK (395 aa).

In the N-terminal section; belongs to the methyltransferase superfamily. tRNA (mnm(5)s(2)U34)-methyltransferase family. This sequence in the C-terminal section; belongs to the DAO family. FAD is required as a cofactor.

The protein localises to the cytoplasm. The enzyme catalyses 5-aminomethyl-2-thiouridine(34) in tRNA + S-adenosyl-L-methionine = 5-methylaminomethyl-2-thiouridine(34) in tRNA + S-adenosyl-L-homocysteine + H(+). In terms of biological role, catalyzes the last two steps in the biosynthesis of 5-methylaminomethyl-2-thiouridine (mnm(5)s(2)U) at the wobble position (U34) in tRNA. Catalyzes the FAD-dependent demodification of cmnm(5)s(2)U34 to nm(5)s(2)U34, followed by the transfer of a methyl group from S-adenosyl-L-methionine to nm(5)s(2)U34, to form mnm(5)s(2)U34. This is tRNA 5-methylaminomethyl-2-thiouridine biosynthesis bifunctional protein MnmC from Pseudomonas syringae pv. tomato (strain ATCC BAA-871 / DC3000).